The following is a 426-amino-acid chain: Protein CgeD (426 aa).

This sequence to B.subtilis spore coat polysaccharide biosynthesis protein SpsA.

May be involved in maturation of the outermost layer of the spore. This Bacillus subtilis (strain 168) protein is Protein CgeD (cgeD).